A 699-amino-acid chain; its full sequence is Mannan-binding lectin serine protease 1 (699 aa).

A signal peptide spans 1 to 19; the sequence is MRWLLLYYALCFSLSKASA. In terms of domain architecture, CUB 1 spans 20–138; sequence HTVELNNMFG…TGFDAHYMAV (119 aa). The interval 20–184 is homodimerization; the sequence is HTVELNNMFG…HTDNRTCRVE (165 aa). The segment at 20–184 is interaction with MBL2; that stretch reads HTVELNNMFG…HTDNRTCRVE (165 aa). Residues 20 to 278 are interaction with FCN2; it reads HTVELNNMFG…STQSHSVLIL (259 aa). N49 carries an N-linked (GlcNAc...) asparagine glycan. Residues E68, D76, D121, S123, D139, V140, and E142 each contribute to the Ca(2+) site. The cysteines at positions 73 and 91 are disulfide-linked. The region spanning 139–182 is the EGF-like; calcium-binding domain; the sequence is DVDECKEREDEELSCDHYCHNYIGGYYCSCRFGYILHTDNRTCR. 4 disulfide bridges follow: C143/C157, C153/C166, C168/C181, and C185/C212. The Ca(2+) site is built by N159, Y160, and G163. N159 bears the (3R)-3-hydroxyasparagine mark. N178 is a glycosylation site (N-linked (GlcNAc...) (complex) asparagine). Residues 185 to 297 form the CUB 2 domain; the sequence is CSDNLFTQRT…RGWRLSYRAA (113 aa). Ca(2+) is bound by residues E235, D245, D282, and S284. A disulfide bond links C242 and C260. Sushi domains are found at residues 299-364 and 365-434; these read NECP…TCKI and VDCR…TCLP. 6 disulfides stabilise this stretch: C301–C349, C329–C362, C367–C414, C397–C432, C436–C572, and C475–C491. An N-linked (GlcNAc...) (complex) asparagine glycan is attached at N385. N407 carries an N-linked (GlcNAc...) asparagine glycan. The Peptidase S1 domain occupies 449 to 696; that stretch reads IFNGRPAQKG…NKDWIQRVTG (248 aa). H490 acts as the Charge relay system in catalysis. The N-linked (GlcNAc) asparagine glycan is linked to L533. The active-site Charge relay system is the D552. N-linked (GlcNAc) asparagine glycosylation is present at E599. 2 disulfides stabilise this stretch: C614-C631 and C642-C672. S646 functions as the Charge relay system in the catalytic mechanism.

This sequence belongs to the peptidase S1 family. In terms of assembly, homodimer. Interacts with the oligomeric lectins MBL2, FCN2 and FCN3; triggers the lectin pathway of complement through activation of C3. Interacts with SERPING1. Interacts with COLEC11; probably triggers the lectin pathway of complement. The iron and 2-oxoglutarate dependent 3-hydroxylation of aspartate and asparagine is (R) stereospecific within EGF domains. Post-translationally, N-glycosylated. Some N-linked glycan are of the complex-type. In terms of processing, autoproteolytic processing of the proenzyme produces the active enzyme composed on the heavy and the light chain held together by a disulfide bond. Isoform 1 but not isoform 2 is activated through autoproteolytic processing. Protein of the plasma which is primarily expressed by liver.

It is found in the secreted. Its activity is regulated as follows. Inhibited by SERPING1 and A2M. Its function is as follows. Functions in the lectin pathway of complement, which performs a key role in innate immunity by recognizing pathogens through patterns of sugar moieties and neutralizing them. The lectin pathway is triggered upon binding of mannan-binding lectin (MBL) and ficolins to sugar moieties which leads to activation of the associated proteases MASP1 and MASP2. Functions as an endopeptidase and may activate MASP2 or C2 or directly activate C3 the key component of complement reaction. Isoform 2 may have an inhibitory effect on the activation of the lectin pathway of complement or may cleave IGFBP5. Also plays a role in development. This is Mannan-binding lectin serine protease 1 (MASP1) from Homo sapiens (Human).